The chain runs to 195 residues: Dual-action ribosomal maturation protein DarP (195 aa).

It belongs to the DarP family.

The protein resides in the cytoplasm. Its function is as follows. Member of a network of 50S ribosomal subunit biogenesis factors which assembles along the 30S-50S interface, preventing incorrect 23S rRNA structures from forming. Promotes peptidyl transferase center (PTC) maturation. This is Dual-action ribosomal maturation protein DarP from Stenotrophomonas maltophilia (strain K279a).